The chain runs to 260 residues: Triosephosphate isomerase (260 aa).

11–13 (NWK) contacts substrate. His103 functions as the Electrophile in the catalytic mechanism. The active-site Proton acceptor is the Glu175. Residues Gly181, Ser220, and 241–242 (GG) each bind substrate.

It belongs to the triosephosphate isomerase family. As to quaternary structure, homodimer.

The protein resides in the cytoplasm. It carries out the reaction D-glyceraldehyde 3-phosphate = dihydroxyacetone phosphate. It participates in carbohydrate biosynthesis; gluconeogenesis. It functions in the pathway carbohydrate degradation; glycolysis; D-glyceraldehyde 3-phosphate from glycerone phosphate: step 1/1. Its function is as follows. Involved in the gluconeogenesis. Catalyzes stereospecifically the conversion of dihydroxyacetone phosphate (DHAP) to D-glyceraldehyde-3-phosphate (G3P). The polypeptide is Triosephosphate isomerase (Shewanella woodyi (strain ATCC 51908 / MS32)).